The following is a 136-amino-acid chain: Probable intron-encoded DNA endonuclease 3 (136 aa).

It belongs to the LAGLIDADG endonuclease family.

The protein localises to the mitochondrion. In terms of biological role, mitochondrial DNA endonuclease involved in intron homing. This chain is Probable intron-encoded DNA endonuclease 3 (hegI3), found in Mycosarcoma maydis (Corn smut fungus).